The sequence spans 542 residues: CTP synthase (542 aa).

The amidoligase domain stretch occupies residues 1–265; that stretch reads MTRFIFITGG…DTQVLKFFGM (265 aa). S13 provides a ligand contact to CTP. S13 contributes to the UTP binding site. 14–19 is a binding site for ATP; it reads SLGKGL. Y54 contacts L-glutamine. ATP is bound at residue D71. D71 and E139 together coordinate Mg(2+). Residues 146–148, 186–191, and K222 contribute to the CTP site; these read DIE and KTKPTQ. UTP contacts are provided by residues 186 to 191 and K222; that span reads KTKPTQ. One can recognise a Glutamine amidotransferase type-1 domain in the interval 291–541; that stretch reads TIAVVGKYTS…IRAAIEQSRL (251 aa). Residue G353 coordinates L-glutamine. The active-site Nucleophile; for glutamine hydrolysis is C380. Residues 381 to 384, E404, and R469 each bind L-glutamine; that span reads FGMQ. Catalysis depends on residues H514 and E516.

Belongs to the CTP synthase family. Homotetramer.

The catalysed reaction is UTP + L-glutamine + ATP + H2O = CTP + L-glutamate + ADP + phosphate + 2 H(+). It catalyses the reaction L-glutamine + H2O = L-glutamate + NH4(+). The enzyme catalyses UTP + NH4(+) + ATP = CTP + ADP + phosphate + 2 H(+). The protein operates within pyrimidine metabolism; CTP biosynthesis via de novo pathway; CTP from UDP: step 2/2. Its activity is regulated as follows. Allosterically activated by GTP, when glutamine is the substrate; GTP has no effect on the reaction when ammonia is the substrate. The allosteric effector GTP functions by stabilizing the protein conformation that binds the tetrahedral intermediate(s) formed during glutamine hydrolysis. Inhibited by the product CTP, via allosteric rather than competitive inhibition. In terms of biological role, catalyzes the ATP-dependent amination of UTP to CTP with either L-glutamine or ammonia as the source of nitrogen. Regulates intracellular CTP levels through interactions with the four ribonucleotide triphosphates. The sequence is that of CTP synthase from Rhodospirillum centenum (strain ATCC 51521 / SW).